We begin with the raw amino-acid sequence, 638 residues long: Methionine--tRNA ligase (638 aa).

Positions 12–22 match the 'HIGH' region motif; that stretch reads YYPSDKLHIGH. Residues cysteine 127, cysteine 130, cysteine 144, and cysteine 147 each coordinate Zn(2+). Residues 296–300 carry the 'KMSKS' region motif; that stretch reads KMSKS. Lysine 299 contributes to the ATP binding site. The 101-residue stretch at 538 to 638 folds into the tRNA-binding domain; the sequence is DFSKVQLRVA…KDIESGSKIS (101 aa).

This sequence belongs to the class-I aminoacyl-tRNA synthetase family. MetG type 2A subfamily. As to quaternary structure, homodimer. The cofactor is Zn(2+).

Its subcellular location is the cytoplasm. It carries out the reaction tRNA(Met) + L-methionine + ATP = L-methionyl-tRNA(Met) + AMP + diphosphate. Functionally, is required not only for elongation of protein synthesis but also for the initiation of all mRNA translation through initiator tRNA(fMet) aminoacylation. This is Methionine--tRNA ligase (metG) from Caldanaerobacter subterraneus subsp. tengcongensis (strain DSM 15242 / JCM 11007 / NBRC 100824 / MB4) (Thermoanaerobacter tengcongensis).